The following is a 420-amino-acid chain: Diaminopimelate decarboxylase (420 aa).

Lys-65 is subject to N6-(pyridoxal phosphate)lysine. Pyridoxal 5'-phosphate-binding positions include Gly-244 and 279-282; that span reads EPGR. The substrate site is built by Arg-282, Arg-318, and Tyr-322. Catalysis depends on Cys-348, which acts as the Proton donor. Substrate-binding residues include Glu-349 and Tyr-377. Residue Tyr-377 coordinates pyridoxal 5'-phosphate.

This sequence belongs to the Orn/Lys/Arg decarboxylase class-II family. LysA subfamily. In terms of assembly, homodimer. Pyridoxal 5'-phosphate is required as a cofactor.

It carries out the reaction meso-2,6-diaminopimelate + H(+) = L-lysine + CO2. Its pathway is amino-acid biosynthesis; L-lysine biosynthesis via DAP pathway; L-lysine from DL-2,6-diaminopimelate: step 1/1. Specifically catalyzes the decarboxylation of meso-diaminopimelate (meso-DAP) to L-lysine. In Aquifex aeolicus (strain VF5), this protein is Diaminopimelate decarboxylase (lysA).